Reading from the N-terminus, the 258-residue chain is GTP cyclohydrolase FolE2 (258 aa).

The protein belongs to the GTP cyclohydrolase IV family.

It carries out the reaction GTP + H2O = 7,8-dihydroneopterin 3'-triphosphate + formate + H(+). It functions in the pathway cofactor biosynthesis; 7,8-dihydroneopterin triphosphate biosynthesis; 7,8-dihydroneopterin triphosphate from GTP: step 1/1. Converts GTP to 7,8-dihydroneopterin triphosphate. This is GTP cyclohydrolase FolE2 from Lawsonia intracellularis (strain PHE/MN1-00).